The sequence spans 269 residues: Phosphonoacetaldehyde hydrolase (269 aa).

Aspartate 10 (nucleophile) is an active-site residue. 2 residues coordinate Mg(2+): aspartate 10 and alanine 12. Lysine 52 acts as the Schiff-base intermediate with substrate in catalysis. Residue aspartate 186 coordinates Mg(2+).

This sequence belongs to the HAD-like hydrolase superfamily. PhnX family. As to quaternary structure, homodimer. Requires Mg(2+) as cofactor.

The enzyme catalyses phosphonoacetaldehyde + H2O = acetaldehyde + phosphate + H(+). In terms of biological role, involved in phosphonate degradation. This is Phosphonoacetaldehyde hydrolase from Salmonella agona (strain SL483).